A 285-amino-acid chain; its full sequence is mRNA decay factor CTH2 (285 aa).

The required for mRNA decay activity stretch occupies residues 37–55 (INIRELEEYYNKTILNEDN). Residues 132–164 (LQQLSQQKPKNDASFSSEKESSAQPKVKSQVQE) are disordered. The span at 153–164 (SAQPKVKSQVQE) shows a compositional bias: polar residues. 2 C3H1-type zinc fingers span residues 169–197 (LYKT…HGLG) and 207–235 (NFRT…HGDD). The tract at residues 252–271 (STSKQSDEKRSNGRGSAKKK) is disordered.

In terms of assembly, interacts with DHH1.

The protein resides in the nucleus. Its subcellular location is the cytoplasm. The protein localises to the P-body. Its function is as follows. Binds to specific AU-rich elements (ARE) in the 3'-untranslated region of target mRNAs and promotes their degradation. In response to iron deficiency, promotes the decay of many mRNAs encoding proteins involved in iron-dependent pathways. Recruits the DHH1 helicase to the SDH4 mRNA and promotes SDH4 mRNA decay. Also destabilizes target mRNA by modulating 3'-end processing, creating extended transcripts that are prone for degradation. This chain is mRNA decay factor CTH2 (TIS11), found in Saccharomyces cerevisiae (strain ATCC 204508 / S288c) (Baker's yeast).